The chain runs to 360 residues: MSELHKAFLRRIKEQETALGLSGLVDEDDIPEPAVMPPTGNSSSTANTEDETILRDYKQFKETNFIQEFYENELGHKFKTYYKPSKKPGSILFCHHGAGSSSMTFGNLVNHIEDESVGIFLFDTRGHGESVATSDFSLDTLVQDVSFVLEQFSSKHQQTSIFLLGHSLGGAVLAKYSTLYPSDILKGLILLDIVEEAAVQSLNAMPSFIARRPLSFPSLSKAISWHMNFLLFNEKSARLSVPDLFTDKLTWITDLNATQPYWQTWFSGLSENFLGFKGPKLLMLSTHESLDKQLMIGQMQGKYQLVVFKNNEKSGHFVHEDLPNHVAVCLTDYIKRAVAPEIFMKEDLGVVPKWGGKINK.

The interval 26–50 (DEDDIPEPAVMPPTGNSSSTANTED) is disordered. Active-site residues include Ser167, Asp192, and His316.

Belongs to the AB hydrolase superfamily.

It carries out the reaction [phosphatase 2A protein]-C-terminal L-leucine methyl ester + H2O = [phosphatase 2A protein]-C-terminal L-leucine + methanol + H(+). Functionally, demethylates proteins that have been reversibly carboxymethylated. Demethylates the phosphatase PP2A catalytic subunit. Involved in the regulation of filamentous growth. This Candida albicans (strain SC5314 / ATCC MYA-2876) (Yeast) protein is Protein phosphatase methylesterase 1 (PPE1).